Here is a 316-residue protein sequence, read N- to C-terminus: Secreted effector protein SifB (316 aa).

Belongs to the Sif family.

The protein resides in the secreted. The protein localises to the host cytoplasm. Functionally, effector proteins function to alter host cell physiology and promote bacterial survival in host tissues. This Salmonella typhimurium (strain LT2 / SGSC1412 / ATCC 700720) protein is Secreted effector protein SifB (sifB).